Reading from the N-terminus, the 133-residue chain is Small ribosomal subunit protein uS9 (133 aa).

The span at 102–113 (KVEGYLSRDPRA) shows a compositional bias: basic and acidic residues. Residues 102-133 (KVEGYLSRDPRAKERRKYGLKKARKAPQFSKR) form a disordered region. Basic residues predominate over residues 114-133 (KERRKYGLKKARKAPQFSKR).

The protein belongs to the universal ribosomal protein uS9 family.

The polypeptide is Small ribosomal subunit protein uS9 (Gloeobacter violaceus (strain ATCC 29082 / PCC 7421)).